Reading from the N-terminus, the 417-residue chain is UDP-N-acetylglucosamine 1-carboxyvinyltransferase (417 aa).

22 to 23 (KN) contacts phosphoenolpyruvate. Arg-91 provides a ligand contact to UDP-N-acetyl-alpha-D-glucosamine. The active-site Proton donor is Cys-115. Cys-115 bears the 2-(S-cysteinyl)pyruvic acid O-phosphothioketal mark. UDP-N-acetyl-alpha-D-glucosamine contacts are provided by residues 120 to 124 (RPVDQ), Asp-304, and Ile-326.

The protein belongs to the EPSP synthase family. MurA subfamily.

It localises to the cytoplasm. It carries out the reaction phosphoenolpyruvate + UDP-N-acetyl-alpha-D-glucosamine = UDP-N-acetyl-3-O-(1-carboxyvinyl)-alpha-D-glucosamine + phosphate. It functions in the pathway cell wall biogenesis; peptidoglycan biosynthesis. Cell wall formation. Adds enolpyruvyl to UDP-N-acetylglucosamine. This is UDP-N-acetylglucosamine 1-carboxyvinyltransferase from Desulfovibrio desulfuricans (strain ATCC 27774 / DSM 6949 / MB).